Here is a 412-residue protein sequence, read N- to C-terminus: Gamma-glutamyl phosphate reductase (412 aa).

The protein belongs to the gamma-glutamyl phosphate reductase family.

The protein localises to the cytoplasm. The enzyme catalyses L-glutamate 5-semialdehyde + phosphate + NADP(+) = L-glutamyl 5-phosphate + NADPH + H(+). Its pathway is amino-acid biosynthesis; L-proline biosynthesis; L-glutamate 5-semialdehyde from L-glutamate: step 2/2. Functionally, catalyzes the NADPH-dependent reduction of L-glutamate 5-phosphate into L-glutamate 5-semialdehyde and phosphate. The product spontaneously undergoes cyclization to form 1-pyrroline-5-carboxylate. The polypeptide is Gamma-glutamyl phosphate reductase (Bartonella quintana (strain Toulouse) (Rochalimaea quintana)).